The chain runs to 133 residues: Putative pre-16S rRNA nuclease (133 aa).

The protein belongs to the YqgF nuclease family.

Its subcellular location is the cytoplasm. Its function is as follows. Could be a nuclease involved in processing of the 5'-end of pre-16S rRNA. In Dehalococcoides mccartyi (strain ATCC BAA-2266 / KCTC 15142 / 195) (Dehalococcoides ethenogenes (strain 195)), this protein is Putative pre-16S rRNA nuclease.